Consider the following 432-residue polypeptide: Uracil permease (432 aa).

The next 12 membrane-spanning stretches (helical) occupy residues 25–45 (LFAM…DPSI), 65–85 (VPAY…AKTA), 89–109 (GAAM…ALII), 124–144 (VVVG…AVGM), 155–175 (LLHF…SVLA), 181–201 (LIPV…VGLV), 206–226 (VAAA…DYPV), 228–248 (VTWE…SEHI), 305–325 (VYSV…GFVG), 330–350 (LISS…FGII), 370–390 (NLVI…LKIS), and 393–413 (FQIT…LILP).

Belongs to the nucleobase:cation symporter-2 (NCS2) (TC 2.A.40) family.

It is found in the cell membrane. Its function is as follows. Transport of uracil in the cell. The chain is Uracil permease (pyrP) from Bacillus caldolyticus.